The primary structure comprises 299 residues: Acetyl-coenzyme A carboxylase carboxyl transferase subunit beta (299 aa).

In terms of domain architecture, CoA carboxyltransferase N-terminal spans 25-294 (VWTKCTSCEQ…PFVEPELIQE (270 aa)). Positions 29, 32, 48, and 51 each coordinate Zn(2+). Residues 29-51 (CTSCEQVLYRDELKRHLEVCPKC) form a C4-type zinc finger.

This sequence belongs to the AccD/PCCB family. In terms of assembly, acetyl-CoA carboxylase is a heterohexamer composed of biotin carboxyl carrier protein (AccB), biotin carboxylase (AccC) and two subunits each of ACCase subunit alpha (AccA) and ACCase subunit beta (AccD). It depends on Zn(2+) as a cofactor.

It is found in the cytoplasm. It catalyses the reaction N(6)-carboxybiotinyl-L-lysyl-[protein] + acetyl-CoA = N(6)-biotinyl-L-lysyl-[protein] + malonyl-CoA. The protein operates within lipid metabolism; malonyl-CoA biosynthesis; malonyl-CoA from acetyl-CoA: step 1/1. Component of the acetyl coenzyme A carboxylase (ACC) complex. Biotin carboxylase (BC) catalyzes the carboxylation of biotin on its carrier protein (BCCP) and then the CO(2) group is transferred by the transcarboxylase to acetyl-CoA to form malonyl-CoA. The chain is Acetyl-coenzyme A carboxylase carboxyl transferase subunit beta from Histophilus somni (strain 129Pt) (Haemophilus somnus).